A 397-amino-acid polypeptide reads, in one-letter code: Riboflavin biosynthesis protein RibBA (397 aa).

Positions 1–199 are DHBP synthase; the sequence is MFHRIEEALE…IEDLIAYRRH (199 aa). Residues 26-27, Asp31, 138-142, and Glu162 each bind D-ribulose 5-phosphate; these read RE and RAGHT. Glu27 contacts Mg(2+). His141 contacts Mg(2+). Positions 200 to 397 are GTP cyclohydrolase II; that stretch reads HETLVTREVE…VNKLGHLLNL (198 aa). Position 250–254 (250–254) interacts with GTP; sequence RVHSE. 3 residues coordinate Zn(2+): Cys255, Cys266, and Cys268. GTP-binding positions include Gln271, 293-295, and Thr315; that span reads EGR. Catalysis depends on Asp327, which acts as the Proton acceptor; for GTP cyclohydrolase activity. Arg329 acts as the Nucleophile; for GTP cyclohydrolase activity in catalysis. Residues Thr350 and Lys355 each coordinate GTP.

The protein in the N-terminal section; belongs to the DHBP synthase family. In the C-terminal section; belongs to the GTP cyclohydrolase II family. The cofactor is Mg(2+). Mn(2+) serves as cofactor. Requires Zn(2+) as cofactor.

It catalyses the reaction D-ribulose 5-phosphate = (2S)-2-hydroxy-3-oxobutyl phosphate + formate + H(+). It carries out the reaction GTP + 4 H2O = 2,5-diamino-6-hydroxy-4-(5-phosphoribosylamino)-pyrimidine + formate + 2 phosphate + 3 H(+). The protein operates within cofactor biosynthesis; riboflavin biosynthesis; 2-hydroxy-3-oxobutyl phosphate from D-ribulose 5-phosphate: step 1/1. It functions in the pathway cofactor biosynthesis; riboflavin biosynthesis; 5-amino-6-(D-ribitylamino)uracil from GTP: step 1/4. Its function is as follows. Catalyzes the conversion of D-ribulose 5-phosphate to formate and 3,4-dihydroxy-2-butanone 4-phosphate. Catalyzes the conversion of GTP to 2,5-diamino-6-ribosylamino-4(3H)-pyrimidinone 5'-phosphate (DARP), formate and pyrophosphate. The protein is Riboflavin biosynthesis protein RibBA of Bacillus cereus (strain B4264).